The following is a 425-amino-acid chain: MIDLKLLREDPDAVRRSQQSRGEDPSLVDALLAADAARRAAISTADTLRAEQKSASKSVGAASPEQRPALLARAKELAEQVKAAETAQAEAEAAFTAAHLAISNVVIDGVPAGGEDDFAVLDVVGEPTALENPRDHLELGESLGLIDMARGAKVSGSRFYFLTGKGALLQLGLLQLALRLAVENGFVPMIPPVLVRPEVMAGTGFLGAHAEEVYRIEADDLYLVGTSEVPLAGYHADEILDLSAGPLRYAGWSSCFRREAGSYGKDTRGVIRVHQFDKVEGFVYCTPADAEAEHQRLLGWQREMLARIEVPYRVIDVAAGDLGSSAARKFDCEAWVPTQQTYRELTSTSNCTTFQARRLSTRYRDGGDAKGKPQIAATLNGTLGTTRWLVAILENHQRPDGSVRVPEALVPFVGTELLEPVGPRG.

Position 226–228 (226–228) interacts with L-serine; that stretch reads TSE. ATP-binding positions include 257 to 259 and Val273; that span reads RRE. Glu280 is a binding site for L-serine. 344 to 347 serves as a coordination point for ATP; it reads ELTS. Thr382 lines the L-serine pocket.

Belongs to the class-II aminoacyl-tRNA synthetase family. Type-1 seryl-tRNA synthetase subfamily. Homodimer. The tRNA molecule binds across the dimer.

It localises to the cytoplasm. The enzyme catalyses tRNA(Ser) + L-serine + ATP = L-seryl-tRNA(Ser) + AMP + diphosphate + H(+). It catalyses the reaction tRNA(Sec) + L-serine + ATP = L-seryl-tRNA(Sec) + AMP + diphosphate + H(+). It participates in aminoacyl-tRNA biosynthesis; selenocysteinyl-tRNA(Sec) biosynthesis; L-seryl-tRNA(Sec) from L-serine and tRNA(Sec): step 1/1. In terms of biological role, catalyzes the attachment of serine to tRNA(Ser). Is also able to aminoacylate tRNA(Sec) with serine, to form the misacylated tRNA L-seryl-tRNA(Sec), which will be further converted into selenocysteinyl-tRNA(Sec). This Mycobacterium avium (strain 104) protein is Serine--tRNA ligase.